A 103-amino-acid chain; its full sequence is Small ribosomal subunit protein eS24 (103 aa).

The protein belongs to the eukaryotic ribosomal protein eS24 family.

The polypeptide is Small ribosomal subunit protein eS24 (Methanococcus maripaludis (strain C6 / ATCC BAA-1332)).